Consider the following 213-residue polypeptide: Ribosomal RNA small subunit methyltransferase G (213 aa).

Residues Gly81, Leu86, 132–133 (VE), and Arg147 contribute to the S-adenosyl-L-methionine site.

This sequence belongs to the methyltransferase superfamily. RNA methyltransferase RsmG family.

It localises to the cytoplasm. It carries out the reaction guanosine(527) in 16S rRNA + S-adenosyl-L-methionine = N(7)-methylguanosine(527) in 16S rRNA + S-adenosyl-L-homocysteine. Specifically methylates the N7 position of guanine in position 527 of 16S rRNA. The polypeptide is Ribosomal RNA small subunit methyltransferase G (Mannheimia succiniciproducens (strain KCTC 0769BP / MBEL55E)).